A 368-amino-acid polypeptide reads, in one-letter code: Phospho-N-acetylmuramoyl-pentapeptide-transferase (368 aa).

Transmembrane regions (helical) follow at residues 32 to 52 (TGGA…WIID), 79 to 99 (TPTM…VLWA), 102 to 122 (LNPY…IGFY), 142 to 160 (LLLE…TRLG), 176 to 196 (VALD…VGAG), 207 to 227 (GLAI…AYLA), 244 to 264 (AGEL…FLWF), 271 to 291 (IFMG…IAVA), 296 to 316 (IVLA…IVQV), and 345 to 365 (QIVI…LSTL).

The protein belongs to the glycosyltransferase 4 family. MraY subfamily. Mg(2+) is required as a cofactor.

The protein localises to the cell inner membrane. The enzyme catalyses UDP-N-acetyl-alpha-D-muramoyl-L-alanyl-gamma-D-glutamyl-meso-2,6-diaminopimeloyl-D-alanyl-D-alanine + di-trans,octa-cis-undecaprenyl phosphate = di-trans,octa-cis-undecaprenyl diphospho-N-acetyl-alpha-D-muramoyl-L-alanyl-D-glutamyl-meso-2,6-diaminopimeloyl-D-alanyl-D-alanine + UMP. It participates in cell wall biogenesis; peptidoglycan biosynthesis. In terms of biological role, catalyzes the initial step of the lipid cycle reactions in the biosynthesis of the cell wall peptidoglycan: transfers peptidoglycan precursor phospho-MurNAc-pentapeptide from UDP-MurNAc-pentapeptide onto the lipid carrier undecaprenyl phosphate, yielding undecaprenyl-pyrophosphoryl-MurNAc-pentapeptide, known as lipid I. The sequence is that of Phospho-N-acetylmuramoyl-pentapeptide-transferase from Nitrobacter winogradskyi (strain ATCC 25391 / DSM 10237 / CIP 104748 / NCIMB 11846 / Nb-255).